We begin with the raw amino-acid sequence, 146 residues long: D-aminoacyl-tRNA deacylase (146 aa).

A Gly-cisPro motif, important for rejection of L-amino acids motif is present at residues 137-138 (GP).

It belongs to the DTD family. As to quaternary structure, homodimer.

It is found in the cytoplasm. It catalyses the reaction glycyl-tRNA(Ala) + H2O = tRNA(Ala) + glycine + H(+). The catalysed reaction is a D-aminoacyl-tRNA + H2O = a tRNA + a D-alpha-amino acid + H(+). Its function is as follows. An aminoacyl-tRNA editing enzyme that deacylates mischarged D-aminoacyl-tRNAs. Also deacylates mischarged glycyl-tRNA(Ala), protecting cells against glycine mischarging by AlaRS. Acts via tRNA-based rather than protein-based catalysis; rejects L-amino acids rather than detecting D-amino acids in the active site. By recycling D-aminoacyl-tRNA to D-amino acids and free tRNA molecules, this enzyme counteracts the toxicity associated with the formation of D-aminoacyl-tRNA entities in vivo and helps enforce protein L-homochirality. The protein is D-aminoacyl-tRNA deacylase of Halalkalibacterium halodurans (strain ATCC BAA-125 / DSM 18197 / FERM 7344 / JCM 9153 / C-125) (Bacillus halodurans).